The sequence spans 188 residues: Peptidyl-tRNA hydrolase (188 aa).

Residue F15 coordinates tRNA. The active-site Proton acceptor is H20. 3 residues coordinate tRNA: Y64, N66, and N112.

Belongs to the PTH family. As to quaternary structure, monomer.

It is found in the cytoplasm. It catalyses the reaction an N-acyl-L-alpha-aminoacyl-tRNA + H2O = an N-acyl-L-amino acid + a tRNA + H(+). Hydrolyzes ribosome-free peptidyl-tRNAs (with 1 or more amino acids incorporated), which drop off the ribosome during protein synthesis, or as a result of ribosome stalling. Its function is as follows. Catalyzes the release of premature peptidyl moieties from peptidyl-tRNA molecules trapped in stalled 50S ribosomal subunits, and thus maintains levels of free tRNAs and 50S ribosomes. In Borrelia duttonii (strain Ly), this protein is Peptidyl-tRNA hydrolase.